The chain runs to 1243 residues: Probable phospholipid-transporting ATPase 7 (1243 aa).

Residues 1–74 lie on the Cytoplasmic side of the membrane; that stretch reads MGRRRIRSRI…TTRYNLITFL (74 aa). Residues 75–96 traverse the membrane as a helical segment; sequence PKCLYEQFHRVANFYFLVAAIL. The Extracellular segment spans residues 97 to 100; the sequence is SVFP. The chain crosses the membrane as a helical span at residues 101 to 123; sequence LSPFNKWSMIAPLIFVVGLSMGK. At 124-305 the chain is on the cytoplasmic side; it reads EALEDWRRFM…SRIEKRMDYI (182 aa). Residues 306–327 form a helical membrane-spanning segment; it reads IYTLFALLVLVSFISSLGFAVM. At 328–359 the chain is on the extracellular side; that stretch reads TKMHMGDWWYLRPDKPERLTNPRNPFHAWVVH. Residues 360–377 traverse the membrane as a helical segment; it reads LITAVLLYGYLIPISLYV. Topologically, residues 378–941 are cytoplasmic; sequence SIELVKVLQA…HGHWCYKRIA (564 aa). Residue Asp-425 is the 4-aspartylphosphate intermediate of the active site. A Glycyl lysine isopeptide (Lys-Gly) (interchain with G-Cter in ubiquitin) cross-link involves residue Lys-623. Residues Asp-886 and Asp-890 each contribute to the Mg(2+) site. A helical transmembrane segment spans residues 942 to 961; it reads QMICYFFYKNITFGLTLFYF. Topologically, residues 962 to 975 are extracellular; that stretch reads EAFTGFSGQAIYND. Residues 976 to 995 form a helical membrane-spanning segment; the sequence is SYLLLFNVILTSLPVIALGV. Residues 996 to 1025 are Cytoplasmic-facing; sequence FEQDVSSEVCLQFPALYQQGPKNLFFDWYR. A helical membrane pass occupies residues 1026–1048; that stretch reads IIGWMANGVYASVVIFSLNIGIF. The Extracellular portion of the chain corresponds to 1049 to 1061; that stretch reads HVQSFCSGGQTAD. The helical transmembrane segment at 1062–1084 threads the bilayer; it reads MDAMGTAMFTCIIWAVNVQIALT. Over 1085–1090 the chain is Cytoplasmic; sequence MSHFTW. Residues 1091-1111 form a helical membrane-spanning segment; sequence IQHVLIWGSIVTWYIFLALFG. The Extracellular portion of the chain corresponds to 1112–1128; that stretch reads MLPPKVSGNIFHMLSET. Residues 1129-1153 form a helical membrane-spanning segment; the sequence is LAPAPIFWLTSLLVIAATTLPYLAY. Topologically, residues 1154–1243 are cytoplasmic; it reads ISFQRSLNPL…TDTTSTTQHS (90 aa).

It belongs to the cation transport ATPase (P-type) (TC 3.A.3) family. Type IV subfamily.

Its subcellular location is the cell membrane. It localises to the endomembrane system. The enzyme catalyses ATP + H2O + phospholipidSide 1 = ADP + phosphate + phospholipidSide 2.. Functionally, involved in transport of phospholipids and in regulation of pollen plasma membrane lipid asymmetry. The polypeptide is Probable phospholipid-transporting ATPase 7 (Arabidopsis thaliana (Mouse-ear cress)).